The following is a 334-amino-acid chain: HTH-type transcriptional regulator RegA (334 aa).

An HTH lacI-type domain is found at 1–57; sequence MAASIKDVAREARVSIATVSRVLNNVDVVNEETKKKVMEAIKKLDYRPNIVARSLKT. The H-T-H motif DNA-binding region spans 5–24; that stretch reads IKDVAREARVSIATVSRVLN.

Functionally, involved in the regulation of amylase production. The sequence is that of HTH-type transcriptional regulator RegA (regA) from Clostridium acetobutylicum (strain ATCC 824 / DSM 792 / JCM 1419 / IAM 19013 / LMG 5710 / NBRC 13948 / NRRL B-527 / VKM B-1787 / 2291 / W).